The sequence spans 178 residues: Alkyl hydroperoxide reductase AhpD (178 aa).

The active-site Proton donor is the Cys-130. A disulfide bond links Cys-130 and Cys-133. Residue Cys-133 is the Cysteine sulfenic acid (-SOH) intermediate of the active site.

The protein belongs to the AhpD family. As to quaternary structure, homotrimer.

It carries out the reaction N(6)-[(R)-dihydrolipoyl]-L-lysyl-[lipoyl-carrier protein] + a hydroperoxide = N(6)-[(R)-lipoyl]-L-lysyl-[lipoyl-carrier protein] + an alcohol + H2O. Its function is as follows. Antioxidant protein with alkyl hydroperoxidase activity. Required for the reduction of the AhpC active site cysteine residues and for the regeneration of the AhpC enzyme activity. The polypeptide is Alkyl hydroperoxide reductase AhpD (Mycolicibacterium paratuberculosis (strain ATCC BAA-968 / K-10) (Mycobacterium paratuberculosis)).